An 880-amino-acid chain; its full sequence is DNA-directed RNA polymerase subunit Rpo1N (880 aa).

Zn(2+) is bound by residues Cys58, Cys61, Cys68, and His71. DsDNA is bound by residues Lys88 and 92 to 95 (EFLK). The Zn(2+) site is built by Cys98 and Cys101. DsDNA is bound at residue Lys138. Cys146 and Cys149 together coordinate Zn(2+). DsDNA is bound by residues Lys303, 305 to 310 (KEGRFR), Arg323, and Gln422. Mg(2+) is bound by residues Asp456, Asp458, and Asp460. Positions 573, 575, 580, and 582 each coordinate Zn(2+). DsDNA is bound by residues 812 to 822 (RTSQSGYMQRR) and Gln815.

Belongs to the RNA polymerase beta' chain family. Part of the 13-subunit RNA polymerase complex. Rpo1N and Rpo5 form a cleft which docks Rpo13. Interacts with Rpo8 on the periphery of the clamp head. The cofactor is Mg(2+). Zn(2+) serves as cofactor.

Its subcellular location is the cytoplasm. The catalysed reaction is RNA(n) + a ribonucleoside 5'-triphosphate = RNA(n+1) + diphosphate. Functionally, DNA-dependent RNA polymerase (RNAP) catalyzes the transcription of DNA into RNA using the four ribonucleoside triphosphates as substrates. Forms the clamp head domain. In Saccharolobus shibatae (strain ATCC 51178 / DSM 5389 / JCM 8931 / NBRC 15437 / B12) (Sulfolobus shibatae), this protein is DNA-directed RNA polymerase subunit Rpo1N.